Consider the following 236-residue polypeptide: Small ribosomal subunit protein uS3 (236 aa).

The 69-residue stretch at 39–107 folds into the KH type-2 domain; that stretch reads VRHFLMQKLS…PTQLNIAEVR (69 aa).

The protein belongs to the universal ribosomal protein uS3 family. Part of the 30S ribosomal subunit. Forms a tight complex with proteins S10 and S14.

Functionally, binds the lower part of the 30S subunit head. Binds mRNA in the 70S ribosome, positioning it for translation. In Blochmanniella pennsylvanica (strain BPEN), this protein is Small ribosomal subunit protein uS3.